The primary structure comprises 164 residues: S-ribosylhomocysteine lyase (164 aa).

Positions 54, 58, and 128 each coordinate Fe cation.

Belongs to the LuxS family. In terms of assembly, homodimer. The cofactor is Fe cation.

The enzyme catalyses S-(5-deoxy-D-ribos-5-yl)-L-homocysteine = (S)-4,5-dihydroxypentane-2,3-dione + L-homocysteine. Functionally, involved in the synthesis of autoinducer 2 (AI-2) which is secreted by bacteria and is used to communicate both the cell density and the metabolic potential of the environment. The regulation of gene expression in response to changes in cell density is called quorum sensing. Catalyzes the transformation of S-ribosylhomocysteine (RHC) to homocysteine (HC) and 4,5-dihydroxy-2,3-pentadione (DPD). This is S-ribosylhomocysteine lyase from Campylobacter jejuni subsp. jejuni serotype O:6 (strain 81116 / NCTC 11828).